Consider the following 154-residue polypeptide: Transcriptional repressor NrdR (154 aa).

A zinc finger lies at 3–34 (CPFCNAPDTKVIDSRLATEGAQVRRRRECMSC). The region spanning 49–139 (PRVIKSDGNR…VYRSFQDVNA (91 aa)) is the ATP-cone domain.

This sequence belongs to the NrdR family. Zn(2+) serves as cofactor.

Its function is as follows. Negatively regulates transcription of bacterial ribonucleotide reductase nrd genes and operons by binding to NrdR-boxes. The protein is Transcriptional repressor NrdR of Hydrogenovibrio crunogenus (strain DSM 25203 / XCL-2) (Thiomicrospira crunogena).